The primary structure comprises 455 residues: Adenylyltransferase and sulfurtransferase MOCS3 (455 aa).

Residues Gly-90, Asp-111, 118–122 (SNLAR), Lys-135, and 179–180 (DN) each bind ATP. Residues 156–236 (AQALTPATAL…QPPPAETVTN (81 aa)) form an interaction with NFS1 region. Zn(2+) is bound by residues Cys-220 and Cys-223. The Glycyl thioester intermediate; for adenylyltransferase activity role is filled by Cys-237. Zn(2+)-binding residues include Cys-295 and Cys-298. Cys-314 and Cys-322 are joined by a disulfide. Residues 345 to 453 (SGSPHLLLDV…WAAKVDGTFP (109 aa)) form the Rhodanese domain. Cys-410 (cysteine persulfide intermediate; for sulfurtransferase activity) is an active-site residue. A Cysteine persulfide modification is found at Cys-410.

The protein in the N-terminal section; belongs to the HesA/MoeB/ThiF family. UBA4 subfamily. Interacts with NFS1. Zn(2+) serves as cofactor.

It localises to the cytoplasm. The protein resides in the cytosol. It carries out the reaction [molybdopterin-synthase sulfur-carrier protein]-C-terminal Gly-Gly + ATP + H(+) = [molybdopterin-synthase sulfur-carrier protein]-C-terminal Gly-Gly-AMP + diphosphate. The enzyme catalyses [molybdopterin-synthase sulfur-carrier protein]-C-terminal Gly-Gly-AMP + S-sulfanyl-L-cysteinyl-[cysteine desulfurase] + AH2 = [molybdopterin-synthase sulfur-carrier protein]-C-terminal-Gly-aminoethanethioate + L-cysteinyl-[cysteine desulfurase] + A + AMP + 2 H(+). It participates in tRNA modification; 5-methoxycarbonylmethyl-2-thiouridine-tRNA biosynthesis. Its pathway is cofactor biosynthesis; molybdopterin biosynthesis. Functionally, plays a central role in 2-thiolation of mcm(5)S(2)U at tRNA wobble positions of cytosolic tRNA(Lys), tRNA(Glu) and tRNA(Gln). Also essential during biosynthesis of the molybdenum cofactor. Acts by mediating the C-terminal thiocarboxylation of sulfur carriers URM1 and MOCS2A. Its N-terminus first activates URM1 and MOCS2A as acyl-adenylates (-COAMP), then the persulfide sulfur on the catalytic cysteine is transferred to URM1 and MOCS2A to form thiocarboxylation (-COSH) of their C-terminus. The reaction probably involves hydrogen sulfide that is generated from the persulfide intermediate and that acts as a nucleophile towards URM1 and MOCS2A. Subsequently, a transient disulfide bond is formed. Does not use thiosulfate as sulfur donor; NFS1 acting as a sulfur donor for thiocarboxylation reactions. The protein is Adenylyltransferase and sulfurtransferase MOCS3 of Sus scrofa (Pig).